Reading from the N-terminus, the 227-residue chain is MAYPFQLGFQDATSPIMEELLHFHDHTLMIVFLISSLVLYIISSMLTTKLTHTSTMDAQEVETIWTILPAIILILIALPSLRILYMMDEINNPSLTVKTMGHQWYWSYEYTDYEDLTFDSYMIPTSDLKPGELRLLEVDNRVVLPMEMTIRMLISSEDVLHSWAVPSLGLKTDAIPGRLNQTTLVASRPGLYYGQCSEICGSNHSFMPIVLELVPLKHFEEWSASML.

Over 1–14 the chain is Mitochondrial intermembrane; sequence MAYPFQLGFQDATS. A helical membrane pass occupies residues 15–45; sequence PIMEELLHFHDHTLMIVFLISSLVLYIISSM. Residues 46–59 lie on the Mitochondrial matrix side of the membrane; sequence LTTKLTHTSTMDAQ. A helical membrane pass occupies residues 60 to 87; that stretch reads EVETIWTILPAIILILIALPSLRILYMM. At 88–227 the chain is on the mitochondrial intermembrane side; the sequence is DEINNPSLTV…HFEEWSASML (140 aa). The Cu cation site is built by His-161, Cys-196, Glu-198, Cys-200, His-204, and Met-207. Residue Glu-198 coordinates Mg(2+).

This sequence belongs to the cytochrome c oxidase subunit 2 family. In terms of assembly, component of the cytochrome c oxidase (complex IV, CIV), a multisubunit enzyme composed of 14 subunits. The complex is composed of a catalytic core of 3 subunits MT-CO1, MT-CO2 and MT-CO3, encoded in the mitochondrial DNA, and 11 supernumerary subunits COX4I, COX5A, COX5B, COX6A, COX6B, COX6C, COX7A, COX7B, COX7C, COX8 and NDUFA4, which are encoded in the nuclear genome. The complex exists as a monomer or a dimer and forms supercomplexes (SCs) in the inner mitochondrial membrane with NADH-ubiquinone oxidoreductase (complex I, CI) and ubiquinol-cytochrome c oxidoreductase (cytochrome b-c1 complex, complex III, CIII), resulting in different assemblies (supercomplex SCI(1)III(2)IV(1) and megacomplex MCI(2)III(2)IV(2)). Found in a complex with TMEM177, COA6, COX18, COX20, SCO1 and SCO2. Interacts with TMEM177 in a COX20-dependent manner. Interacts with COX20. Interacts with COX16. Cu cation is required as a cofactor.

Its subcellular location is the mitochondrion inner membrane. The enzyme catalyses 4 Fe(II)-[cytochrome c] + O2 + 8 H(+)(in) = 4 Fe(III)-[cytochrome c] + 2 H2O + 4 H(+)(out). Functionally, component of the cytochrome c oxidase, the last enzyme in the mitochondrial electron transport chain which drives oxidative phosphorylation. The respiratory chain contains 3 multisubunit complexes succinate dehydrogenase (complex II, CII), ubiquinol-cytochrome c oxidoreductase (cytochrome b-c1 complex, complex III, CIII) and cytochrome c oxidase (complex IV, CIV), that cooperate to transfer electrons derived from NADH and succinate to molecular oxygen, creating an electrochemical gradient over the inner membrane that drives transmembrane transport and the ATP synthase. Cytochrome c oxidase is the component of the respiratory chain that catalyzes the reduction of oxygen to water. Electrons originating from reduced cytochrome c in the intermembrane space (IMS) are transferred via the dinuclear copper A center (CU(A)) of subunit 2 and heme A of subunit 1 to the active site in subunit 1, a binuclear center (BNC) formed by heme A3 and copper B (CU(B)). The BNC reduces molecular oxygen to 2 water molecules using 4 electrons from cytochrome c in the IMS and 4 protons from the mitochondrial matrix. The chain is Cytochrome c oxidase subunit 2 (MT-CO2) from Equus caballus (Horse).